Consider the following 314-residue polypeptide: Caspase-like protein (314 aa).

It belongs to the peptidase C14A family.

Its function is as follows. May be involved in viral replication. The protein is Caspase-like protein of Heliothis virescens ascovirus 3e (HvAV-3e).